A 510-amino-acid chain; its full sequence is NAD(P)H-quinone oxidoreductase subunit 2 A, chloroplastic (510 aa).

13 consecutive transmembrane segments (helical) span residues 26 to 46 (LFDGSFIFPEGILIFGLILLL), 57 to 77 (IPWFYFISSISLVMSITALLF), 99 to 119 (IFQFLILLCSTLCIPLSVEYI), 124 to 144 (MAITEFLLFVLTATLGGMFLC), 149 to 169 (LITIFVAPECFSLCSYLLSGY), 183 to 203 (YLLMGGASSSILVHGFSWLYG), 227 to 247 (PGISIALIFITVGIGFKLSPA), 295 to 315 (WHPLLEILAILSMILGNLIAI), 323 to 342 (MLAYSSIGQIGYVIIGIIVG), 354 to 374 (YMLFYISMNLGTFACIVLFGL), 395 to 415 (ALSLALCLLSLGGLPPLAGFF), 418 to 438 (LHLFWCGWQAGLYFLVSIGLF), and 484 to 504 (MIVCVIASTIPGISMNPIIAI).

Belongs to the complex I subunit 2 family. In terms of assembly, NDH is composed of at least 16 different subunits, 5 of which are encoded in the nucleus.

It localises to the plastid. Its subcellular location is the chloroplast thylakoid membrane. It catalyses the reaction a plastoquinone + NADH + (n+1) H(+)(in) = a plastoquinol + NAD(+) + n H(+)(out). The enzyme catalyses a plastoquinone + NADPH + (n+1) H(+)(in) = a plastoquinol + NADP(+) + n H(+)(out). Its function is as follows. NDH shuttles electrons from NAD(P)H:plastoquinone, via FMN and iron-sulfur (Fe-S) centers, to quinones in the photosynthetic chain and possibly in a chloroplast respiratory chain. The immediate electron acceptor for the enzyme in this species is believed to be plastoquinone. Couples the redox reaction to proton translocation, and thus conserves the redox energy in a proton gradient. This is NAD(P)H-quinone oxidoreductase subunit 2 A, chloroplastic from Oenothera biennis (German evening primrose).